The primary structure comprises 307 residues: UDP-3-O-acyl-N-acetylglucosamine deacetylase (307 aa).

Zn(2+) contacts are provided by histidine 80, histidine 239, and aspartate 243. The active-site Proton donor is the histidine 266.

The protein belongs to the LpxC family. Requires Zn(2+) as cofactor.

The enzyme catalyses a UDP-3-O-[(3R)-3-hydroxyacyl]-N-acetyl-alpha-D-glucosamine + H2O = a UDP-3-O-[(3R)-3-hydroxyacyl]-alpha-D-glucosamine + acetate. The protein operates within glycolipid biosynthesis; lipid IV(A) biosynthesis; lipid IV(A) from (3R)-3-hydroxytetradecanoyl-[acyl-carrier-protein] and UDP-N-acetyl-alpha-D-glucosamine: step 2/6. Catalyzes the hydrolysis of UDP-3-O-myristoyl-N-acetylglucosamine to form UDP-3-O-myristoylglucosamine and acetate, the committed step in lipid A biosynthesis. The sequence is that of UDP-3-O-acyl-N-acetylglucosamine deacetylase from Neisseria gonorrhoeae (strain ATCC 700825 / FA 1090).